The primary structure comprises 461 residues: Ribulose bisphosphate carboxylase (461 aa).

Residue Asn-112 coordinates substrate. Lys-167 acts as the Proton acceptor in catalysis. Position 169 (Lys-169) interacts with substrate. Mg(2+)-binding residues include Lys-192, Asp-194, and Glu-195. Lys-192 bears the N6-carboxylysine mark. His-288 acts as the Proton acceptor in catalysis. Substrate is bound by residues Arg-289, His-322, and Ser-369.

The protein belongs to the RuBisCO large chain family. Type II subfamily. As to quaternary structure, homodimer. Mg(2+) is required as a cofactor.

It catalyses the reaction 2 (2R)-3-phosphoglycerate + 2 H(+) = D-ribulose 1,5-bisphosphate + CO2 + H2O. It carries out the reaction D-ribulose 1,5-bisphosphate + O2 = 2-phosphoglycolate + (2R)-3-phosphoglycerate + 2 H(+). Its function is as follows. RuBisCO catalyzes two reactions: the carboxylation of D-ribulose 1,5-bisphosphate, the primary event in carbon dioxide fixation, as well as the oxidative fragmentation of the pentose substrate. Both reactions occur simultaneously and in competition at the same active site. The chain is Ribulose bisphosphate carboxylase from Rhodopseudomonas palustris (strain HaA2).